The chain runs to 164 residues: Large ribosomal subunit protein uL10 (164 aa).

Belongs to the universal ribosomal protein uL10 family. As to quaternary structure, part of the ribosomal stalk of the 50S ribosomal subunit. The N-terminus interacts with L11 and the large rRNA to form the base of the stalk. The C-terminus forms an elongated spine to which L12 dimers bind in a sequential fashion forming a multimeric L10(L12)X complex.

Functionally, forms part of the ribosomal stalk, playing a central role in the interaction of the ribosome with GTP-bound translation factors. The protein is Large ribosomal subunit protein uL10 (rplJ) of Helicobacter pylori (strain ATCC 700392 / 26695) (Campylobacter pylori).